The primary structure comprises 293 residues: Putative ribose uptake protein RbsU (293 aa).

The next 10 membrane-spanning stretches (helical) occupy residues 5-24 (ALLI…TVAS), 34-51 (IIGA…LAVV), 58-80 (TGTN…IITF), 95-114 (TTAF…LGNW), 121-138 (IIGF…RMTV), 153-170 (RAVV…LYSA), 177-199 (IDGL…IYGF), 212-234 (ITWL…LISA), 241-263 (LATG…IYFL), and 273-292 (VITI…TVFI).

It belongs to the GRP transporter (TC 2.A.7.5) family.

Its subcellular location is the cell membrane. Functionally, could be involved in the uptake of ribose. The protein is Putative ribose uptake protein RbsU (rbsU) of Staphylococcus aureus (strain COL).